The following is a 166-amino-acid chain: MSAIIEAKKQLVDEIAEVLSNSVSTVIVDYRGLTVAEVTDLRSQLREAGVEYKVYKNTMVRRAAEKAGIEGLDEFLTGPTAIATSSEDAVAAAKVISGFAKDHEALEIKSGVMEGNVITAEEVKTVGSLPSHDGLVSMLLSVLQAPVRNFAYAVKAIGEQKEENAE.

Belongs to the universal ribosomal protein uL10 family. As to quaternary structure, part of the ribosomal stalk of the 50S ribosomal subunit. The N-terminus interacts with L11 and the large rRNA to form the base of the stalk. The C-terminus forms an elongated spine to which L12 dimers bind in a sequential fashion forming a multimeric L10(L12)X complex.

Forms part of the ribosomal stalk, playing a central role in the interaction of the ribosome with GTP-bound translation factors. The chain is Large ribosomal subunit protein uL10 from Staphylococcus aureus (strain JH1).